A 331-amino-acid chain; its full sequence is ADP-L-glycero-D-manno-heptose-6-epimerase (331 aa).

NADP(+) is bound by residues 11 to 12 (FI), 32 to 33 (DN), K39, K54, 75 to 79 (EGACS), and N92. Catalysis depends on Y139, which acts as the Proton acceptor. K143 contributes to the NADP(+) binding site. A substrate-binding site is contributed by N168. Residues V169 and K177 each contribute to the NADP(+) site. K177 functions as the Proton acceptor in the catalytic mechanism. Substrate contacts are provided by residues R179, H186, 200–203 (FGEY), R213, and Y292.

The protein belongs to the NAD(P)-dependent epimerase/dehydratase family. HldD subfamily. As to quaternary structure, homopentamer. The cofactor is NADP(+).

It carries out the reaction ADP-D-glycero-beta-D-manno-heptose = ADP-L-glycero-beta-D-manno-heptose. It functions in the pathway nucleotide-sugar biosynthesis; ADP-L-glycero-beta-D-manno-heptose biosynthesis; ADP-L-glycero-beta-D-manno-heptose from D-glycero-beta-D-manno-heptose 7-phosphate: step 4/4. Its function is as follows. Catalyzes the interconversion between ADP-D-glycero-beta-D-manno-heptose and ADP-L-glycero-beta-D-manno-heptose via an epimerization at carbon 6 of the heptose. This is ADP-L-glycero-D-manno-heptose-6-epimerase from Ralstonia pickettii (strain 12J).